The primary structure comprises 89 residues: MFPKRQGIIVWLHSLKYGKQLRKFGNIHYISKRLKYAVLYCDMEQVDHVMKKLAALPFVKRVEPSYRPFLRLEFESKGEKEKDSPYPLG.

Belongs to the UPF0298 family.

Its subcellular location is the cytoplasm. This is UPF0298 protein GTNG_0961 from Geobacillus thermodenitrificans (strain NG80-2).